A 1187-amino-acid polypeptide reads, in one-letter code: Non-receptor tyrosine-protein kinase TYK2 (1187 aa).

The FERM domain maps to 26 to 431 (GGLKVLLHWA…GYFRLTADSS (406 aa)). Tyr292 is modified (phosphotyrosine). Residues 335 to 366 (KEEGSSGSSGRNPQASLFGKKAKAHKAVGQPA) are disordered. Residues 339–349 (SSGSSGRNPQA) are compositionally biased toward polar residues. An SH2; atypical domain is found at 450-529 (GIHGPLLEPF…GRSFPSVREL (80 aa)). Residues Ser499 and Ser525 each carry the phosphoserine modification. A Protein kinase 1 domain is found at 589–875 (ITQLSHLGQG…LTRLQPHNLA (287 aa)). The residue at position 604 (Tyr604) is a Phosphotyrosine. Positions 610–629 (VEGSGDPEEGKMDDEDPLVP) are disordered. The span at 614 to 626 (GDPEEGKMDDEDP) shows a compositional bias: acidic residues. Ser884 is subject to Phosphoserine. In terms of domain architecture, Protein kinase 2 spans 897 to 1176 (LKKIRDLGEG…PILKTVHEKY (280 aa)). ATP contacts are provided by residues 903–911 (LGEGHFGKV) and Lys930. Residue Asp1023 is the Proton acceptor of the active site. At Tyr1054 the chain carries Phosphotyrosine; by autocatalysis. A Phosphotyrosine modification is found at Tyr1055.

This sequence belongs to the protein kinase superfamily. Tyr protein kinase family. JAK subfamily. Interacts (via FERM domain) with JAKMIP1. Interacts with PIK3R1; this interaction is important for cell migration. Interacts with MPL/TPOR. As to quaternary structure, (Microbial infection) Interacts with Epstein-Barr virus protein LMP1; this interaction inhibits TYK2-mediated interferon signaling. In terms of assembly, (Microbial infection) Interacts with papillomavirus-18 protein E6; this interaction impairs JAK-STAT activation by interferon-alpha. (Microbial infection) Interacts with Epstein-Barr virus (EBV) tegument protein BGLF2; this interaction participates in the inhibition of type I IFN signaling by the virus. In terms of processing, phosphorylated. Phosphorylation by JAK1 at Tyr-1054 and Tyr-1055 induces kinase activation. Observed in all cell lines analyzed. Expressed in a variety of lymphoid and non-lymphoid cell lines.

It catalyses the reaction L-tyrosyl-[protein] + ATP = O-phospho-L-tyrosyl-[protein] + ADP + H(+). With respect to regulation, the protein kinase 1 domain (also termed pseudokinase domain) mediates autoinhibition of the TYK2 kinase domain. Its function is as follows. Tyrosine kinase of the non-receptor type involved in numerous cytokines and interferons signaling, which regulates cell growth, development, cell migration, innate and adaptive immunity. Plays both structural and catalytic roles in numerous interleukins and interferons (IFN-alpha/beta) signaling. Associates with heterodimeric cytokine receptor complexes and activates STAT family members including STAT1, STAT3, STAT4 or STAT6. The heterodimeric cytokine receptor complexes are composed of (1) a TYK2-associated receptor chain (IFNAR1, IL12RB1, IL10RB or IL13RA1), and (2) a second receptor chain associated either with JAK1 or JAK2. In response to cytokine-binding to receptors, phosphorylates and activates receptors (IFNAR1, IL12RB1, IL10RB or IL13RA1), creating docking sites for STAT members. In turn, recruited STATs are phosphorylated by TYK2 (or JAK1/JAK2 on the second receptor chain), form homo- and heterodimers, translocate to the nucleus, and regulate cytokine/growth factor responsive genes. Negatively regulates STAT3 activity by promototing phosphorylation at a specific tyrosine that differs from the site used for signaling. The polypeptide is Non-receptor tyrosine-protein kinase TYK2 (TYK2) (Homo sapiens (Human)).